A 135-amino-acid polypeptide reads, in one-letter code: Cytochrome b5, seed isoform (135 aa).

The Cytochrome b5 heme-binding domain maps to 5–81; the sequence is SKVFTLAEVS…LDEYYVGDID (77 aa). Heme is bound by residues His40 and His64. The chain crosses the membrane as a helical span at residues 107-127; that stretch reads FIVKLLQFLVPLIILGVAFGV.

It belongs to the cytochrome b5 family. Specifically expressed in developing seeds.

Its subcellular location is the endoplasmic reticulum membrane. The protein localises to the microsome membrane. Its function is as follows. Cytochrome b5 is a membrane bound hemoprotein which function as an electron carrier for several membrane bound oxygenases. May play a key role in the modification by desaturation of fatty acids in the endoplasmic reticulum, which in the developing seed is utilized for membrane synthesis and in the developmentally regulated production of large amounts of storage lipids. This is Cytochrome b5, seed isoform from Nicotiana tabacum (Common tobacco).